The following is a 508-amino-acid chain: MSQEKYIMAIDQGTTSSRAIIFNQKGEKVSSSQKEFPQIFPHAGWVEHNANQIWNSVQSVIAGAFIESSIKPSQIEAIGITNQRETTVIWDKKTGVPIYNAIVWQSRQTAPIAEQLKQDGHTKMIHEKTGLVIDAYFSATKIRWILDHVPGAQERAEKGELLFGTIDTWLVWKLTDGAVHVTDYSNAARTMLYNIKDLTWDDEILELLNIPKDMLPEVKSNSEIYGKTAAFHFYGGEVPISGMAGDQQAALFGQLAFEPGMVKNTYGTGSFIIMNTGDEMQLSSNNLLTTIGYGINGKVHYALEGSIFIAGSAIQWLRDGLKMIETSPESEQFALASTSDDEVYVVPAFTGLGAPYWDSNARGSVFGLTRGTSKEDFVKATLQSIAYQVRDVIDTMQVDSGIDIQQLRVDGGAAMNNMLMQFQADILGIDIARAKNLETTALGAAFLAGLAVGYWEDMDALKELNATGQLFKASMNESRKEKLYKGWKRAVKATQVFTQEEDADDDAK.

Thr14 is a binding site for ADP. ATP contacts are provided by Thr14, Thr15, and Ser16. Residue Thr14 participates in sn-glycerol 3-phosphate binding. Arg18 is an ADP binding site. 3 residues coordinate sn-glycerol 3-phosphate: Arg84, Glu85, and Tyr136. Residues Arg84, Glu85, and Tyr136 each coordinate glycerol. At His232 the chain carries Phosphohistidine; by HPr. Position 246 (Asp246) interacts with sn-glycerol 3-phosphate. Glycerol is bound by residues Asp246 and Gln247. ADP contacts are provided by Thr268 and Gly311. Positions 268, 311, 315, and 412 each coordinate ATP. ADP-binding residues include Gly412 and Asn416.

This sequence belongs to the FGGY kinase family. As to quaternary structure, homotetramer and homodimer (in equilibrium). Post-translationally, the phosphoenolpyruvate-dependent sugar phosphotransferase system (PTS), including enzyme I, and histidine-containing protein (HPr) are required for the phosphorylation, which leads to the activation of the enzyme.

It catalyses the reaction glycerol + ATP = sn-glycerol 3-phosphate + ADP + H(+). It functions in the pathway polyol metabolism; glycerol degradation via glycerol kinase pathway; sn-glycerol 3-phosphate from glycerol: step 1/1. Its activity is regulated as follows. Activated by phosphorylation and inhibited by fructose 1,6-bisphosphate (FBP). Key enzyme in the regulation of glycerol uptake and metabolism. Catalyzes the phosphorylation of glycerol to yield sn-glycerol 3-phosphate. In Streptococcus pyogenes serotype M3 (strain ATCC BAA-595 / MGAS315), this protein is Glycerol kinase.